Consider the following 172-residue polypeptide: Trypsin inhibitor DE-3 (172 aa).

Disulfide bonds link Cys39-Cys83 and Cys132-Cys139.

This sequence belongs to the protease inhibitor I3 (leguminous Kunitz-type inhibitor) family.

Functionally, inhibition of trypsin. In Erythrina latissima (Broad-leaved coral tree), this protein is Trypsin inhibitor DE-3.